The primary structure comprises 260 residues: Hydroxyacylglutathione hydrolase (260 aa).

Zn(2+)-binding residues include His-66, His-68, Asp-70, His-71, His-125, Asp-150, and His-188.

The protein belongs to the metallo-beta-lactamase superfamily. Glyoxalase II family. In terms of assembly, monomer. Zn(2+) serves as cofactor.

The enzyme catalyses an S-(2-hydroxyacyl)glutathione + H2O = a 2-hydroxy carboxylate + glutathione + H(+). It participates in secondary metabolite metabolism; methylglyoxal degradation; (R)-lactate from methylglyoxal: step 2/2. In terms of biological role, thiolesterase that catalyzes the hydrolysis of S-D-lactoyl-glutathione to form glutathione and D-lactic acid. This chain is Hydroxyacylglutathione hydrolase, found in Prochlorococcus marinus (strain MIT 9303).